The following is a 540-amino-acid chain: Tyrosine-protein kinase transforming protein erbB (540 aa).

A Protein kinase domain is found at 132 to 399 (FKKVKVLGFG…KMARDPPRYL (268 aa)). ATP is bound by residues 138–146 (LGFGAFGTV) and Lys-165. Asp-257 acts as the Proton acceptor in catalysis.

Belongs to the protein kinase superfamily. Tyr protein kinase family. EGF receptor subfamily.

The enzyme catalyses L-tyrosyl-[protein] + ATP = O-phospho-L-tyrosyl-[protein] + ADP + H(+). The chain is Tyrosine-protein kinase transforming protein erbB (V-ERBB) from Avian erythroblastosis virus (strain ts167).